The following is a 258-amino-acid chain: 2-oxo-tetronate isomerase (258 aa).

Glutamate 143 acts as the Proton donor/acceptor in catalysis. Glutamate 143, aspartate 178, glutamine 204, and glutamate 240 together coordinate Mg(2+). Catalysis depends on glutamate 240, which acts as the Proton donor/acceptor.

It belongs to the hyi family. OtnI subfamily.

The catalysed reaction is 2-dehydro-L-erythronate = 3-dehydro-L-erythronate. It catalyses the reaction 2-dehydro-D-erythronate = 3-dehydro-D-erythronate. In terms of biological role, catalyzes the isomerization of 2-oxo-tetronate to 3-oxo-tetronate. This Haemophilus influenzae (strain ATCC 51907 / DSM 11121 / KW20 / Rd) protein is 2-oxo-tetronate isomerase.